Here is a 197-residue protein sequence, read N- to C-terminus: Phosphoheptose isomerase (197 aa).

Residues 34–196 (MVQCLLGGNK…DRTLFPQDEQ (163 aa)) form the SIS domain. Substrate is bound at residue 49-51 (NGG). Zn(2+) contacts are provided by H58 and E62. Residues E62, 91 to 92 (ND), 117 to 119 (STS), S122, and Q172 contribute to the substrate site. Residues Q172 and H180 each coordinate Zn(2+).

This sequence belongs to the SIS family. GmhA subfamily. As to quaternary structure, homotetramer. Zn(2+) serves as cofactor.

It localises to the cytoplasm. It carries out the reaction 2 D-sedoheptulose 7-phosphate = D-glycero-alpha-D-manno-heptose 7-phosphate + D-glycero-beta-D-manno-heptose 7-phosphate. Its pathway is carbohydrate biosynthesis; D-glycero-D-manno-heptose 7-phosphate biosynthesis; D-glycero-alpha-D-manno-heptose 7-phosphate and D-glycero-beta-D-manno-heptose 7-phosphate from sedoheptulose 7-phosphate: step 1/1. In terms of biological role, catalyzes the isomerization of sedoheptulose 7-phosphate in D-glycero-D-manno-heptose 7-phosphate. The sequence is that of Phosphoheptose isomerase from Shewanella piezotolerans (strain WP3 / JCM 13877).